The primary structure comprises 454 residues: Sensor histidine kinase RppB (454 aa).

Topologically, residues 1 to 13 (MNTRRLFARSRLQ) are periplasmic. Residues 14–34 (LAFWYALVMGGILTLLGLGVY) form a helical membrane-spanning segment. The Cytoplasmic portion of the chain corresponds to 35–186 (RAIVQANWMA…LAAFDAENKR (152 aa)). Residues 187–207 (ILWILGLSFPIALGLVAFSSW) traverse the membrane as a helical segment. Residues 208–454 (GLAGLAMRPI…PIFSVPIVHS (247 aa)) lie on the Periplasmic side of the membrane. Residues 230-448 (NAAHELRSPL…LFTIQLPIFS (219 aa)) form the Histidine kinase domain. The residue at position 233 (histidine 233) is a Phosphohistidine; by autocatalysis.

The protein resides in the cell inner membrane. It carries out the reaction ATP + protein L-histidine = ADP + protein N-phospho-L-histidine.. Functionally, member of two-component regulatory system RppA/RppB, involved in the establishment of the appropriate stoichiometry between the 2 photosystems. It senses changes in the plastoquinone (PQ) redox poise. Another group shows this two-component pair, renamed NrsR/NrsS, controls the nickel-dependent expression of the nrsBACD operon; they suggest the photosystem-related activities seen earlier are due to the expression of NrsS (RppB) in the absence of its natural substrate NrsR (RppA). The protein is Sensor histidine kinase RppB of Synechocystis sp. (strain ATCC 27184 / PCC 6803 / Kazusa).